The chain runs to 123 residues: Ribosome-binding factor A (123 aa).

This sequence belongs to the RbfA family. Monomer. Binds 30S ribosomal subunits, but not 50S ribosomal subunits or 70S ribosomes.

The protein resides in the cytoplasm. In terms of biological role, one of several proteins that assist in the late maturation steps of the functional core of the 30S ribosomal subunit. Associates with free 30S ribosomal subunits (but not with 30S subunits that are part of 70S ribosomes or polysomes). Required for efficient processing of 16S rRNA. May interact with the 5'-terminal helix region of 16S rRNA. This is Ribosome-binding factor A from Lactobacillus gasseri (strain ATCC 33323 / DSM 20243 / BCRC 14619 / CIP 102991 / JCM 1131 / KCTC 3163 / NCIMB 11718 / NCTC 13722 / AM63).